Reading from the N-terminus, the 145-residue chain is Small ribosomal subunit protein eS19 (145 aa).

K23 carries the post-translational modification N6-acetyllysine. Position 67 is an omega-N-methylarginine (R67). Residues K111 and K115 each carry the N6-acetyllysine modification. Residue K143 is modified to N6-succinyllysine.

This sequence belongs to the eukaryotic ribosomal protein eS19 family. In terms of assembly, component of the small ribosomal subunit. Part of the small subunit (SSU) processome, composed of more than 70 proteins and the RNA chaperone small nucleolar RNA (snoRNA) U3. Interacts with RPS19BP1; the interaction is direct and mediates the integration of RPS19 in state post-A1. Interacts with RPS19BP1.

Its subcellular location is the cytoplasm. It is found in the nucleus. The protein localises to the nucleolus. Its function is as follows. Component of the small ribosomal subunit. The ribosome is a large ribonucleoprotein complex responsible for the synthesis of proteins in the cell. Required for pre-rRNA processing and maturation of 40S ribosomal subunits. Part of the small subunit (SSU) processome, first precursor of the small eukaryotic ribosomal subunit. During the assembly of the SSU processome in the nucleolus, many ribosome biogenesis factors, an RNA chaperone and ribosomal proteins associate with the nascent pre-rRNA and work in concert to generate RNA folding, modifications, rearrangements and cleavage as well as targeted degradation of pre-ribosomal RNA by the RNA exosome. The sequence is that of Small ribosomal subunit protein eS19 (RPS19) from Pongo abelii (Sumatran orangutan).